A 262-amino-acid polypeptide reads, in one-letter code: Ornithine carbamoyltransferase (262 aa).

Carbamoyl phosphate is bound by residues 3–7 (STRTR), Gln30, Arg54, and 81–84 (HPTQ). L-ornithine contacts are provided by residues Asn114, Asp178, and 182–183 (SM). Residues 219 to 222 (HCLP) and Thr247 contribute to the carbamoyl phosphate site.

Belongs to the aspartate/ornithine carbamoyltransferase superfamily. OTCase family.

It localises to the cytoplasm. It catalyses the reaction carbamoyl phosphate + L-ornithine = L-citrulline + phosphate + H(+). Its pathway is amino-acid biosynthesis; L-arginine biosynthesis; L-arginine from L-ornithine and carbamoyl phosphate: step 1/3. This chain is Ornithine carbamoyltransferase (argF), found in Neisseria cinerea.